The sequence spans 248 residues: tRNA (guanine-N(1)-)-methyltransferase (248 aa).

Residues glycine 126 and leucine 150–leucine 155 each bind S-adenosyl-L-methionine. Positions tryptophan 224–aspartate 248 are disordered. Over residues threonine 227 to aspartate 239 the composition is skewed to basic and acidic residues.

It belongs to the RNA methyltransferase TrmD family. Homodimer.

Its subcellular location is the cytoplasm. It carries out the reaction guanosine(37) in tRNA + S-adenosyl-L-methionine = N(1)-methylguanosine(37) in tRNA + S-adenosyl-L-homocysteine + H(+). Its function is as follows. Specifically methylates guanosine-37 in various tRNAs. The chain is tRNA (guanine-N(1)-)-methyltransferase from Micrococcus luteus (strain ATCC 4698 / DSM 20030 / JCM 1464 / CCM 169 / CCUG 5858 / IAM 1056 / NBRC 3333 / NCIMB 9278 / NCTC 2665 / VKM Ac-2230) (Micrococcus lysodeikticus).